The chain runs to 221 residues: Mitochondrial cardiolipin hydrolase (221 aa).

Topologically, residues 1 to 4 (MGRS) are mitochondrial intermembrane. A required for mitochondrial localization region spans residues 1–38 (MGRSSWRLVFAAGAGLALALEALPWLMRWLLAGRRPRR). Residues 5-27 (SWRLVFAAGAGLALALEALPWLM) traverse the membrane as a helical segment. Residues 28-221 (RWLLAGRRPR…SFFPQKHRGH (194 aa)) are Cytoplasmic-facing. The C3H1-type; atypical zinc finger occupies 44-75 (PSQVTCTEALLQAPGLPPGPSGCPCSLPHSES). The PLD phosphodiesterase domain occupies 148–175 (DLGYMHHKFAIVDKKVLITGSLNWTTQA). Residues H153, K155, and D160 contribute to the active site.

The protein belongs to the phospholipase D family. MitoPLD/Zucchini subfamily. Homodimer. Interacts with MOV10L1. Interacts with MIGA1 and MIGA2; possibly facilitating homodimer formation. Interacts with GK2. In terms of tissue distribution, predominantly expressed in testis (at protein level) and in growing ovary. Also expressed in the brain, eye and urinary bladder (at protein level), but its levels were low or undetectable in other organs.

It localises to the mitochondrion outer membrane. Its subcellular location is the nucleus membrane. The protein resides in the cell membrane. The protein localises to the golgi apparatus. It catalyses the reaction a cardiolipin + H2O = a 1,2-diacyl-sn-glycero-3-phospho-(1'-sn-glycerol) + a 1,2-diacyl-sn-glycero-3-phosphate + H(+). With respect to regulation, single stranded DNA (ssDNA) hydrolase activity does not depend upon, but is stimulated by the presence of Ca(2+) and Mn(2+). MIGA1 and MIGA2 increase PLD6 self-association affinity and affects the homodimer conformation facilitating its phospholipase activity over the nuclease activity. MYC induces its expression and stimulates its phospholipase activity. Presents phospholipase and nuclease activities, depending on the different physiological conditions. Interaction with Mitoguardin (MIGA1 or MIGA2) affects the dimer conformation, facilitating the lipase activity over the nuclease activity. Plays a key role in mitochondrial fusion and fission via its phospholipase activity. In its phospholipase role, it uses the mitochondrial lipid cardiolipin as substrate to generate phosphatidate (PA or 1,2-diacyl-sn-glycero-3-phosphate), a second messenger signaling lipid. Production of PA facilitates Mitofusin-mediated fusion, whereas the cleavage of PA by the Lipin family of phosphatases produces diacylgycerol (DAG) which promotes mitochondrial fission. Both Lipin and DAG regulate mitochondrial dynamics and membrane fusion/fission, important processes for adapting mitochondrial metabolism to changes in cell physiology. Mitochondrial fusion enables cells to cope with the increased nucleotide demand during DNA synthesis. Mitochondrial function and dynamics are closely associated with biological processes such as cell growth, proliferation, and differentiation. Mediator of MYC activity, promotes mitochondrial fusion and activates AMPK which in turn inhibits YAP/TAZ, thereby inducing cell growth and proliferation. The endonuclease activity plays a critical role in PIWI-interacting RNA (piRNA) biogenesis during spermatogenesis. Implicated in spermatogenesis and sperm fertility in testicular germ cells, its single strand-specific nuclease activity is critical for the biogenesis/maturation of PIWI-interacting RNA (piRNA). MOV10L1 selectively binds to piRNA precursors and funnels them to the endonuclease that catalyzes the first cleavage step of piRNA processing to generate piRNA intermediate fragments that are subsequently loaded to Piwi proteins. Cleaves either DNA or RNA substrates with similar affinity, producing a 5' phosphate end, in this way it participates in the processing of primary piRNA transcripts. piRNAs provide essential protection against the activity of mobile genetic elements. piRNA-mediated transposon silencing is thus critical for maintaining genome stability, in particular in germline cells when transposons are mobilized as a consequence of wide-spread genomic demethylation. PA may act as signaling molecule in the recognition/transport of the precursor RNAs of primary piRNAs. Interacts with tesmin in testes, suggesting a role in spermatogenesis via association with its interacting partner. This is Mitochondrial cardiolipin hydrolase (Pld6) from Mus musculus (Mouse).